Consider the following 57-residue polypeptide: Potassium channel toxin alpha-KTx 8.7 (57 aa).

The N-terminal stretch at 1–28 (MSRLYAIILIALVFNVIMTIMPDMKVEA) is a signal peptide. 3 disulfides stabilise this stretch: C31-C47, C34-C52, and C38-C54.

In terms of tissue distribution, expressed by the venom gland.

Its subcellular location is the secreted. Functionally, inhibits voltage-gated potassium channel rKv1.1/KCNA1 at nanomolar ranges (IC(50)=8.5 nM). This chain is Potassium channel toxin alpha-KTx 8.7, found in Mesobuthus eupeus (Lesser Asian scorpion).